The chain runs to 383 residues: tRNA-specific 2-thiouridylase MnmA (383 aa).

ATP-binding positions include 29 to 36 (GMSGGVDS) and M55. The tract at residues 115-117 (NPD) is interaction with target base in tRNA. C120 serves as the catalytic Nucleophile. An intrachain disulfide couples C120 to C217. G145 contributes to the ATP binding site. The interval 167 to 169 (KDQ) is interaction with tRNA. C217 acts as the Cysteine persulfide intermediate in catalysis. The interval 329–330 (RY) is interaction with tRNA.

Belongs to the MnmA/TRMU family.

Its subcellular location is the cytoplasm. The catalysed reaction is S-sulfanyl-L-cysteinyl-[protein] + uridine(34) in tRNA + AH2 + ATP = 2-thiouridine(34) in tRNA + L-cysteinyl-[protein] + A + AMP + diphosphate + H(+). Its function is as follows. Catalyzes the 2-thiolation of uridine at the wobble position (U34) of tRNA, leading to the formation of s(2)U34. The polypeptide is tRNA-specific 2-thiouridylase MnmA (Pasteurella multocida (strain Pm70)).